The following is a 231-amino-acid chain: Demethylmenaquinone methyltransferase (231 aa).

Residues T62, D80, 100 to 101, and S117 contribute to the S-adenosyl-L-methionine site; that span reads DA.

The protein belongs to the class I-like SAM-binding methyltransferase superfamily. MenG/UbiE family.

The catalysed reaction is a 2-demethylmenaquinol + S-adenosyl-L-methionine = a menaquinol + S-adenosyl-L-homocysteine + H(+). It participates in quinol/quinone metabolism; menaquinone biosynthesis; menaquinol from 1,4-dihydroxy-2-naphthoate: step 2/2. Its function is as follows. Methyltransferase required for the conversion of demethylmenaquinol (DMKH2) to menaquinol (MKH2). The chain is Demethylmenaquinone methyltransferase from Mycobacterium marinum (strain ATCC BAA-535 / M).